A 1066-amino-acid chain; its full sequence is Beta-galactosidase (1066 aa).

Substrate-binding residues include Asn110 and Asp209. Residue Asp209 participates in Na(+) binding. The Mg(2+) site is built by Glu432, His434, and Glu477. Residues Glu477 and 553–556 (EYAH) contribute to the substrate site. Glu477 acts as the Proton donor in catalysis. Glu553 functions as the Nucleophile in the catalytic mechanism. Residue Asn613 participates in Mg(2+) binding. Na(+) contacts are provided by Phe617 and Asn620. Substrate is bound by residues Asn620 and Trp1041.

It belongs to the glycosyl hydrolase 2 family. As to quaternary structure, homotetramer. Mg(2+) is required as a cofactor. It depends on Na(+) as a cofactor.

It carries out the reaction Hydrolysis of terminal non-reducing beta-D-galactose residues in beta-D-galactosides.. This chain is Beta-galactosidase, found in Yersinia pseudotuberculosis serotype IB (strain PB1/+).